We begin with the raw amino-acid sequence, 201 residues long: NADH-quinone oxidoreductase subunit C (201 aa).

Belongs to the complex I 30 kDa subunit family. As to quaternary structure, NDH-1 is composed of 14 different subunits. Subunits NuoB, C, D, E, F, and G constitute the peripheral sector of the complex.

It is found in the cell inner membrane. It catalyses the reaction a quinone + NADH + 5 H(+)(in) = a quinol + NAD(+) + 4 H(+)(out). In terms of biological role, NDH-1 shuttles electrons from NADH, via FMN and iron-sulfur (Fe-S) centers, to quinones in the respiratory chain. The immediate electron acceptor for the enzyme in this species is believed to be ubiquinone. Couples the redox reaction to proton translocation (for every two electrons transferred, four hydrogen ions are translocated across the cytoplasmic membrane), and thus conserves the redox energy in a proton gradient. The chain is NADH-quinone oxidoreductase subunit C from Dechloromonas aromatica (strain RCB).